An 853-amino-acid chain; its full sequence is DNA mismatch repair protein MutS (853 aa).

Gly-614–Ser-621 provides a ligand contact to ATP.

This sequence belongs to the DNA mismatch repair MutS family.

Its function is as follows. This protein is involved in the repair of mismatches in DNA. It is possible that it carries out the mismatch recognition step. This protein has a weak ATPase activity. The polypeptide is DNA mismatch repair protein MutS (Escherichia coli (strain SE11)).